Reading from the N-terminus, the 1393-residue chain is DNA-directed RNA polymerase subunit beta' (1393 aa).

The Zn(2+) site is built by Cys70, Cys72, Cys85, and Cys88. The Mg(2+) site is built by Asp461, Asp463, and Asp465. Zn(2+) contacts are provided by Cys804, Cys877, Cys884, and Cys887.

The protein belongs to the RNA polymerase beta' chain family. As to quaternary structure, the RNAP catalytic core consists of 2 alpha, 1 beta, 1 beta' and 1 omega subunit. When a sigma factor is associated with the core the holoenzyme is formed, which can initiate transcription. It depends on Mg(2+) as a cofactor. Zn(2+) serves as cofactor.

It carries out the reaction RNA(n) + a ribonucleoside 5'-triphosphate = RNA(n+1) + diphosphate. Functionally, DNA-dependent RNA polymerase catalyzes the transcription of DNA into RNA using the four ribonucleoside triphosphates as substrates. This Rhodospirillum rubrum (strain ATCC 11170 / ATH 1.1.1 / DSM 467 / LMG 4362 / NCIMB 8255 / S1) protein is DNA-directed RNA polymerase subunit beta'.